A 239-amino-acid polypeptide reads, in one-letter code: Aldehyde dehydrogenase, dimeric NADP-preferring (239 aa).

Residue cysteine 30 is part of the active site.

It belongs to the aldehyde dehydrogenase family. As to quaternary structure, homodimer.

The protein localises to the cytoplasm. The catalysed reaction is an aldehyde + NAD(+) + H2O = a carboxylate + NADH + 2 H(+). It carries out the reaction octanal + NAD(+) + H2O = octanoate + NADH + 2 H(+). Its function is as follows. ALDHs play a major role in the detoxification of alcohol-derived acetaldehyde. They are involved in the metabolism of corticosteroids, biogenic amines, neurotransmitters, and lipid peroxidation. Oxidizes medium and long chain aldehydes into non-toxic fatty acids. Preferentially oxidizes aromatic aldehyde substrates. Comprises about 50 percent of corneal epithelial soluble proteins. May play a role in preventing corneal damage caused by ultraviolet light. The protein is Aldehyde dehydrogenase, dimeric NADP-preferring (ALDH3A1) of Bos taurus (Bovine).